The sequence spans 686 residues: MSAKQDGSTAESRKAPHSYRERVNSTVELAALVYRPLTASGALLSILRGKLYRRRSVRNVLDVVAVRSISGGQGHSAESKVRVEYLTPAEGNANGNSISNISAAPCADIRGSSDTAATSSSPSTPAQPTLLEGRCKMCLLDPTVLKATELCPDPASAAQHCTPVFLLGAAVVGSHVTRQLEAAVQAGQLSRKAADLLQQLHERLAGGPSSVSLTEDTDGSEQPQGLPRAAAAPPPPSNKRRASYTGAVEVTFTPRAVELNYQAYTMSELLSMVLPLREHADLVALSGFEQVGHIAHVNLSAAHLPYADIIGQVILDCNETVSVVVNKVDAISSVFREFKMDIIGLRRRTDSVDGNVVAGADLDDAGEAGGSLTAAERQAIALEALSPTYSLAEARVHRLLTATVRQHGCSFRVPYNRVYWNSRLSFEHTRLVDRMRPGDVLFDVMAGVGPFAVPAAKKGVQVFANDLNPVAAQYMKVNAELNHLPANALHVFNMDGRDFLNSVLFTSVTRAADASLPGHLCTGRRHVTMNLPAIAVEFLDVFQPLSSTCAPASEQRCNASAAAVVNERWNHLPAHVDPNAIDRRTLFHVYCFSAAEDLITDAVRQVEVNLGYTLPPENIEETLMVRDVAPTKRMMCVSFTLPPAFWKNLLASRPGQGGEPGGAHAETASTLVEVEQAAKKARPDKM.

Residues 206–244 form a disordered region; that stretch reads GGPSSVSLTEDTDGSEQPQGLPRAAAAPPPPSNKRRASY. S-adenosyl-L-methionine is bound by residues H428, 466-467, 495-496, and N530; these read DL and DG.

The protein belongs to the class I-like SAM-binding methyltransferase superfamily. TRM5/TYW2 family. In terms of assembly, monomer.

It is found in the mitochondrion matrix. The protein resides in the nucleus. It localises to the cytoplasm. It catalyses the reaction guanosine(37) in tRNA + S-adenosyl-L-methionine = N(1)-methylguanosine(37) in tRNA + S-adenosyl-L-homocysteine + H(+). Its function is as follows. Specifically methylates the N1 position of guanosine-37 in various cytoplasmic and mitochondrial tRNAs. Methylation is not dependent on the nature of the nucleoside 5' of the target nucleoside. This is the first step in the biosynthesis of wybutosine (yW), a modified base adjacent to the anticodon of tRNAs and required for accurate decoding. The sequence is that of tRNA (guanine(37)-N(1))-methyltransferase from Leishmania major.